Reading from the N-terminus, the 99-residue chain is Aspartyl/glutamyl-tRNA(Asn/Gln) amidotransferase subunit C (99 aa).

Belongs to the GatC family. In terms of assembly, heterotrimer of A, B and C subunits.

The enzyme catalyses L-glutamyl-tRNA(Gln) + L-glutamine + ATP + H2O = L-glutaminyl-tRNA(Gln) + L-glutamate + ADP + phosphate + H(+). The catalysed reaction is L-aspartyl-tRNA(Asn) + L-glutamine + ATP + H2O = L-asparaginyl-tRNA(Asn) + L-glutamate + ADP + phosphate + 2 H(+). Its function is as follows. Allows the formation of correctly charged Asn-tRNA(Asn) or Gln-tRNA(Gln) through the transamidation of misacylated Asp-tRNA(Asn) or Glu-tRNA(Gln) in organisms which lack either or both of asparaginyl-tRNA or glutaminyl-tRNA synthetases. The reaction takes place in the presence of glutamine and ATP through an activated phospho-Asp-tRNA(Asn) or phospho-Glu-tRNA(Gln). The chain is Aspartyl/glutamyl-tRNA(Asn/Gln) amidotransferase subunit C from Solibacter usitatus (strain Ellin6076).